The chain runs to 322 residues: Alanine dehydrogenase (322 aa).

Residue Lys65 is the Proton donor/acceptor of the active site. Residues Arg108, Thr135–Gln136, Asp157–Arg159, Gly217–Asp219, Lys223, and Ser290 contribute to the NAD(+) site.

It belongs to the ornithine cyclodeaminase/mu-crystallin family. Archaeal alanine dehydrogenase subfamily. As to quaternary structure, homodimer.

It catalyses the reaction L-alanine + NAD(+) + H2O = pyruvate + NH4(+) + NADH + H(+). Functionally, catalyzes the NAD(+)-dependent oxidative deamination of L-alanine to pyruvate, and the reverse reaction, the reductive amination of pyruvate. Its physiological role is not known. Cannot use NADP(+) instead of NAD(+) as a cosubstrate. In the deamination direction, can also efficiently use L-2-aminobutyrate as substrate. In the reductive amination direction, also exhibits high activity with 2-oxobutyrate and oxaloacetate as substrate. In contrast to bacterial homologs, does not exhibit any ornithine cyclodeaminase activity. This chain is Alanine dehydrogenase, found in Archaeoglobus fulgidus (strain ATCC 49558 / DSM 4304 / JCM 9628 / NBRC 100126 / VC-16).